We begin with the raw amino-acid sequence, 204 residues long: Altered inheritance of mitochondria protein 20 (204 aa).

The chain crosses the membrane as a helical span at residues 6 to 26 (VAVGTAVGIPIAVGVIIALIF).

The protein belongs to the SKG1 family.

The protein resides in the vacuole membrane. Involved in cell cycle progression and surviving DNA damage. The chain is Altered inheritance of mitochondria protein 20 (AIM20) from Saccharomyces cerevisiae (strain JAY291) (Baker's yeast).